The primary structure comprises 446 residues: Serine decarboxylase 3 (446 aa).

Substrate is bound at residue His162. N6-(pyridoxal phosphate)lysine is present on Lys274.

Belongs to the group II decarboxylase family. It depends on pyridoxal 5'-phosphate as a cofactor.

It catalyses the reaction L-serine + H(+) = ethanolamine + CO2. Catalyzes the biosynthesis of ethanolamine from serine. Decarboxylation of free serine is the major source of ethanolamine production in plants and ethanolamine metabolism is crucial for the synthesis of choline, phosphatidylethanolamine (PE) and phosphatidylcholine (PC), and thus for plant growth. The protein is Serine decarboxylase 3 of Oryza sativa subsp. japonica (Rice).